A 716-amino-acid chain; its full sequence is ATP-dependent DNA helicase DinG (716 aa).

Residues A17–T294 form the Helicase ATP-binding domain. Position 54–61 (A54–T61) interacts with ATP. C120 contributes to the [4Fe-4S] cluster binding site. Residues E131 to Q134 carry the DEAH box motif. C194, C199, and C205 together coordinate [4Fe-4S] cluster. A DEAH box motif is present at residues D248–H251. The 212-residue stretch at A487 to P698 folds into the Helicase C-terminal domain.

The protein belongs to the helicase family. DinG subfamily. Type 1 sub-subfamily. The cofactor is [4Fe-4S] cluster.

The enzyme catalyses Couples ATP hydrolysis with the unwinding of duplex DNA at the replication fork by translocating in the 5'-3' direction. This creates two antiparallel DNA single strands (ssDNA). The leading ssDNA polymer is the template for DNA polymerase III holoenzyme which synthesizes a continuous strand.. It carries out the reaction ATP + H2O = ADP + phosphate + H(+). Functionally, DNA-dependent ATPase and 5'-3' DNA helicase. Unwinds D-loops, R-loops, forked DNA and G-quadruplex DNA. The chain is ATP-dependent DNA helicase DinG from Shigella flexneri.